The sequence spans 569 residues: Spermatogenesis-associated protein 16 (569 aa).

This sequence belongs to the SPATA16 family.

The protein localises to the golgi apparatus. It is found in the cytoplasmic vesicle. It localises to the secretory vesicle. The protein resides in the acrosome. In terms of biological role, essential for spermiogenesis and male fertility. Involved in the formation of sperm acrosome during spermatogenesis. The chain is Spermatogenesis-associated protein 16 (SPATA16) from Macaca fascicularis (Crab-eating macaque).